Here is a 394-residue protein sequence, read N- to C-terminus: Multidrug resistance protein D (394 aa).

Over 1–8 the chain is Cytoplasmic; that stretch reads MKRQRNVN. The helical transmembrane segment at 9-29 threads the bilayer; it reads LLLMLVLLVAVGQMAQTIYIP. Topologically, residues 30-46 are periplasmic; that stretch reads AIADMARDLNVREGAVQ. A helical transmembrane segment spans residues 47–67; sequence SVMGAYLLTYGVSQLFYGPIS. Topologically, residues 68–73 are cytoplasmic; sequence DRVGRR. Residues 74–94 traverse the membrane as a helical segment; the sequence is PVILVGMSIFMLATLVAVTTS. Residue serine 95 is a topological domain, periplasmic. The chain crosses the membrane as a helical span at residues 96 to 116; the sequence is LTVLIAASAMQGMGTGVGGVM. Residues 117-134 lie on the Cytoplasmic side of the membrane; the sequence is ARTLPRDLYERTQLRHAN. Residues 135 to 155 form a helical membrane-spanning segment; that stretch reads SLLNMGILVSPLLAPLIGGLL. Residues 156–162 are Periplasmic-facing; sequence DTMWNWR. The chain crosses the membrane as a helical span at residues 163 to 183; sequence ACYLFLLVLCAGVTFSMARWM. Residues 184-212 lie on the Cytoplasmic side of the membrane; the sequence is PETRPVDAPRTRLLTSYKTLFGNSGFNCY. Residues 213-233 form a helical membrane-spanning segment; that stretch reads LLMLIGGLAGIAAFEACSGVL. Topologically, residues 234–242 are periplasmic; the sequence is MGAVLGLSS. A helical transmembrane segment spans residues 243–263; sequence MTVSILFILPIPAAFFGAWFA. Residues 264–276 lie on the Cytoplasmic side of the membrane; it reads GRPNKRFSTLMWQ. The chain crosses the membrane as a helical span at residues 277 to 297; sequence SVICCLLAGLLMWIPDWFGVM. Residue asparagine 298 is a topological domain, periplasmic. The helical transmembrane segment at 299-319 threads the bilayer; the sequence is VWTLLVPAALFFFGAGMLFPL. Topologically, residues 320 to 329 are cytoplasmic; the sequence is ATSGAMEPFP. A helical membrane pass occupies residues 330 to 350; it reads FLAGTAGALVGGLQNIGSGVL. The Periplasmic portion of the chain corresponds to 351 to 364; that stretch reads ASLSAMLPQTGQGS. Residues 365-385 form a helical membrane-spanning segment; it reads LGLLMTLMGLLIVLCWLPLAT. Residues 386-394 lie on the Cytoplasmic side of the membrane; the sequence is RMSHQGQPV.

Belongs to the major facilitator superfamily.

It localises to the cell inner membrane. In terms of biological role, multidrug resistance pump that participates in a low energy shock adaptive response. This chain is Multidrug resistance protein D (emrD), found in Escherichia coli (strain K12).